The chain runs to 113 residues: Iron-sulfur cluster insertion protein ErpA (113 aa).

Cysteine 41, cysteine 105, and cysteine 107 together coordinate iron-sulfur cluster.

It belongs to the HesB/IscA family. As to quaternary structure, homodimer. Requires iron-sulfur cluster as cofactor.

Functionally, required for insertion of 4Fe-4S clusters for at least IspG. The chain is Iron-sulfur cluster insertion protein ErpA from Actinobacillus pleuropneumoniae serotype 5b (strain L20).